We begin with the raw amino-acid sequence, 331 residues long: Tryptophan--tRNA ligase (331 aa).

Residues 10–12 (QPS) and 18–19 (GN) each bind ATP. The 'HIGH' region motif lies at 11-19 (PSGQLTLGN). Asp-133 lines the L-tryptophan pocket. ATP is bound by residues 145–147 (GED), Val-184, and 193–197 (KMSKS). The 'KMSKS' region signature appears at 193–197 (KMSKS).

This sequence belongs to the class-I aminoacyl-tRNA synthetase family. In terms of assembly, homodimer.

It localises to the cytoplasm. The enzyme catalyses tRNA(Trp) + L-tryptophan + ATP = L-tryptophyl-tRNA(Trp) + AMP + diphosphate + H(+). Catalyzes the attachment of tryptophan to tRNA(Trp). The chain is Tryptophan--tRNA ligase from Listeria monocytogenes serotype 4b (strain F2365).